The following is a 263-amino-acid chain: Ubiquinone/menaquinone biosynthesis C-methyltransferase UbiE (263 aa).

Residues Thr-86, Asp-107, and Ser-152 each coordinate S-adenosyl-L-methionine.

It belongs to the class I-like SAM-binding methyltransferase superfamily. MenG/UbiE family.

The enzyme catalyses a 2-demethylmenaquinol + S-adenosyl-L-methionine = a menaquinol + S-adenosyl-L-homocysteine + H(+). It catalyses the reaction a 2-methoxy-6-(all-trans-polyprenyl)benzene-1,4-diol + S-adenosyl-L-methionine = a 5-methoxy-2-methyl-3-(all-trans-polyprenyl)benzene-1,4-diol + S-adenosyl-L-homocysteine + H(+). Its pathway is quinol/quinone metabolism; menaquinone biosynthesis; menaquinol from 1,4-dihydroxy-2-naphthoate: step 2/2. It functions in the pathway cofactor biosynthesis; ubiquinone biosynthesis. In terms of biological role, methyltransferase required for the conversion of demethylmenaquinol (DMKH2) to menaquinol (MKH2) and the conversion of 2-polyprenyl-6-methoxy-1,4-benzoquinol (DDMQH2) to 2-polyprenyl-3-methyl-6-methoxy-1,4-benzoquinol (DMQH2). In Brucella anthropi (strain ATCC 49188 / DSM 6882 / CCUG 24695 / JCM 21032 / LMG 3331 / NBRC 15819 / NCTC 12168 / Alc 37) (Ochrobactrum anthropi), this protein is Ubiquinone/menaquinone biosynthesis C-methyltransferase UbiE.